We begin with the raw amino-acid sequence, 420 residues long: MAP kinase-interacting serine/threonine-protein kinase 1 (420 aa).

The segment at 1-25 (MGSSEPIPIAESDKRKKKKRKARAT) is disordered. A Phosphoserine; by PAK2 modification is found at serine 27. Residues 37–321 (KLTSELLGEG…AAQVLQHPWV (285 aa)) enclose the Protein kinase domain. ATP is bound by residues 43-51 (LGEGANAKV) and lysine 66. Aspartate 158 functions as the Proton acceptor in the catalytic mechanism. Serine 168 and serine 173 each carry phosphoserine. 3 positions are modified to phosphothreonine: threonine 197, threonine 202, and threonine 332. Residues 386-420 (LSPPSKSRLARRRALAQAGRSGDAPPSPTPTTPAP) form a disordered region. A compositionally biased stretch (low complexity) spans 400-409 (LAQAGRSGDA). Pro residues predominate over residues 410-420 (PPSPTPTTPAP).

Belongs to the protein kinase superfamily. CAMK Ser/Thr protein kinase family. In terms of assembly, interacts with the C-terminal regions of EIF4G1 and EIF4G2. Also binds to dephosphorylated ERK1 and ERK2, and to the p38 kinases. Mg(2+) serves as cofactor. Dual phosphorylation of Thr-197 and Thr-202 activates the kinase. Phosphorylation of Thr-332 activates the kinase. MAPK3/ERK1 is one of the kinases which activate MKNK1/MNK1. Phosphorylation by PAK2 leads to a reduced phosphorylation of EIF4G1.

The enzyme catalyses L-seryl-[protein] + ATP = O-phospho-L-seryl-[protein] + ADP + H(+). The catalysed reaction is L-threonyl-[protein] + ATP = O-phospho-L-threonyl-[protein] + ADP + H(+). Phosphorylated and activated by the p38 kinases and kinases in the Erk pathway. Functionally, may play a role in the response to environmental stress and cytokines. Appears to regulate translation by phosphorylating EIF4E, thus increasing the affinity of this protein for the 7-methylguanosine-containing mRNA cap. This is MAP kinase-interacting serine/threonine-protein kinase 1 (MKNK1) from Bos taurus (Bovine).